A 178-amino-acid polypeptide reads, in one-letter code: MSRENNCTTADLAWGIPSITQAWGLWALFGVVTMLLLISLAALLSQWTRGRRRTQEEQGPPSGRSVEEVPLYGNLHYLQTGRLSEESRSEEQDPSSGGLARGAEEATCYTSLQLRPAQGRIPSSGTPIKYCEVVLDSEPKPQASGPEPELYASVCAQTRRARASFPDQAYANSQPAPS.

The Extracellular portion of the chain corresponds to 1–23; the sequence is MSRENNCTTADLAWGIPSITQAW. N6 is a glycosylation site (N-linked (GlcNAc...) asparagine). Residues 24–44 form a helical; Signal-anchor for type III membrane protein membrane-spanning segment; the sequence is GLWALFGVVTMLLLISLAALL. At 45–178 the chain is on the cytoplasmic side; that stretch reads SQWTRGRRRT…AYANSQPAPS (134 aa). Phosphoserine occurs at positions 62 and 65. The residue at position 72 (Y72) is a Phosphotyrosine. An interaction with GRB2 region spans residues 72-75; that stretch reads YGNL. Residues 81–102 are disordered; that stretch reads GRLSEESRSEEQDPSSGGLARG. Phosphoserine is present on residues S84, S87, and S89. Y109 carries the post-translational modification Phosphotyrosine. T126 carries the post-translational modification Phosphothreonine. The interaction with PTPN11 stretch occupies residues 128–133; sequence IKYCEV. A phosphotyrosine mark is found at Y130 and Y151. The interaction with CSK stretch occupies residues 151 to 154; that stretch reads YASV. S164 bears the Phosphoserine mark. Y170 is modified (phosphotyrosine). An interaction with GRB2 region spans residues 170 to 173; that stretch reads YANS.

In terms of assembly, homodimer; disulfide-linked. When phosphorylated, interacts with PTPN11/SHP2, GRB2 and CSK. Phosphorylated on tyrosines upon TCR activation; which promotes recruitment of PTPN11, GRB2 and CSK. In terms of tissue distribution, lymph node, spleen and thymus.

The protein localises to the cell membrane. Negatively regulates T-cell antigen receptor (TCR)-mediated signaling. Involved in positive selection of T-cells. This Rattus norvegicus (Rat) protein is Signaling threshold-regulating transmembrane adapter 1 (Sit1).